We begin with the raw amino-acid sequence, 76 residues long: Esculentin-2SN1 (76 aa).

A signal peptide spans 1–22 (MFTMKKSLLFLFFLGTISLSLC). Residues 23–37 (EQERGADEDDGGEEV) constitute a propeptide that is removed on maturation. The cysteines at positions 70 and 76 are disulfide-linked.

This sequence belongs to the frog skin active peptide (FSAP) family. Esculentin subfamily. Expressed by the skin glands.

Its subcellular location is the secreted. Its function is as follows. Antimicrobial peptide. Active against some Gram-negative and a variety of Gram-positive bacterial strains. Not active against fungi. Shows very weak hemolytic activity against human erythrocytes. The protein is Esculentin-2SN1 of Sylvirana spinulosa (Fine-spined frog).